We begin with the raw amino-acid sequence, 302 residues long: Mas-related G-protein coupled receptor member A3 (302 aa).

Residues 1–17 are Extracellular-facing; the sequence is MNETIPGSIDIETLIPD. A glycan (N-linked (GlcNAc...) asparagine) is linked at Asn-2. A helical transmembrane segment spans residues 18–38; that stretch reads LMIIIFGLVGLTGNAIVFWLL. Topologically, residues 39 to 46 are cytoplasmic; the sequence is GFRMHRTA. Residues 47–67 form a helical membrane-spanning segment; that stretch reads FLVYILNLALADFLFLLCHII. A glycan (N-linked (GlcNAc...) asparagine) is linked at Asn-68. The Extracellular segment spans residues 68-81; the sequence is NSTVDLLKFTLPKG. The helical transmembrane segment at 82–102 threads the bilayer; it reads IFAFCFHTIKRVLYITGLSML. At 103–129 the chain is on the cytoplasmic side; it reads SAISTERCLSVLCPIWYHCRRPEHTST. Residues 130-150 form a helical membrane-spanning segment; the sequence is VMCAVIWVLSLLICILDGYFC. The Extracellular segment spans residues 151–167; the sequence is GYLDNHYFNYSVCQAWD. Asn-159 is a glycosylation site (N-linked (GlcNAc...) asparagine). A helical membrane pass occupies residues 168 to 188; it reads IFIGAYLMFLFVVLCLSTLAL. Residues 189–211 are Cytoplasmic-facing; the sequence is LARLFCGARNMKFTRLFVTIMLT. Residues 212–232 traverse the membrane as a helical segment; the sequence is VLVFLLCGLPWGITWFLLFWI. At 233 to 242 the chain is on the extracellular side; it reads APGVFVLDYS. Residues 243–263 traverse the membrane as a helical segment; that stretch reads PLLVLTAINSCANPIIYFFVG. Residues 264–302 lie on the Cytoplasmic side of the membrane; it reads SFRQRLNKQTLKMVLQKALQDTPETPENMVEMSRNKAEP.

It belongs to the G-protein coupled receptor 1 family. Mas subfamily. As to expression, expressed exclusively in dorsal root ganglia and nodose ganglia. Expressed in a subset of sensory neurons that includes nociceptors. Expressed in the subclass of non-peptidergic sensory neurons that are IB4(+) and VR1(-).

Its subcellular location is the cell membrane. Functionally, orphan receptor. May be a receptor for RFamide-family neuropeptides such as NPFF and NPAF, which are analgesic in vivo. May regulate nociceptor function and/or development, including the sensation or modulation of pain. Activated by the antimalarial drug chloroquine. Mediates chloroquine-induced itch, in a histamine-independent manner. The protein is Mas-related G-protein coupled receptor member A3 (Mrgpra3) of Mus musculus (Mouse).